The following is a 131-amino-acid chain: Global transcriptional regulator Spx 2 (131 aa).

C10 and C13 are oxidised to a cystine.

The protein belongs to the ArsC family. Spx subfamily. Interacts with the C-terminal domain of the alpha subunit of the RNAP.

It localises to the cytoplasm. Functionally, global transcriptional regulator that plays a key role in stress response and exerts either positive or negative regulation of genes. Acts by interacting with the C-terminal domain of the alpha subunit of the RNA polymerase (RNAP). This interaction can enhance binding of RNAP to the promoter region of target genes and stimulate their transcription, or block interaction of RNAP with activator. This chain is Global transcriptional regulator Spx 2, found in Bacillus anthracis.